Here is a 531-residue protein sequence, read N- to C-terminus: SWI/SNF-related matrix-associated actin-dependent regulator of chromatin subfamily D member 2 (531 aa).

Residues Arg81 and Arg104 each carry the asymmetric dimethylarginine modification. At Ser203 the chain carries Phosphoserine. The disordered stretch occupies residues 205–227 (SKAEGDTAGTTGTPGGTPAGDKV). Residue Thr217 is modified to Phosphothreonine. Lys226 is covalently cross-linked (Glycyl lysine isopeptide (Lys-Gly) (interchain with G-Cter in SUMO2)). The SWIB/MDM2 domain occupies 306 to 383 (HQPPQYKLDP…PMKLAGLLQH (78 aa)).

It belongs to the SMARCD family. Component of the multiprotein chromatin-remodeling complexes SWI/SNF: SWI/SNF-A (BAF), SWI/SNF-B (PBAF) and related complexes. The canonical complex contains a catalytic subunit (either SMARCA4/BRG1/BAF190A or SMARCA2/BRM/BAF190B), and at least SMARCE1, ACTL6A/BAF53, SMARCC1/BAF155, SMARCC2/BAF170, and SMARCB1/SNF5/BAF47. Other subunits specific to each of the complexes may also be present permitting several possible combinations developmentally and tissue specific. Component of the BAF complex, which includes at least actin (ACTB), ARID1A/BAF250A, ARID1B/BAF250B, SMARCA2/BRM, SMARCA4/BRG1, ACTL6A/BAF53, ACTL6B/BAF53B, SMARCE1/BAF57, SMARCC1/BAF155, SMARCC2/BAF170, SMARCB1/SNF5/INI1, and one or more SMARCD1/BAF60A, SMARCD2/BAF60B, or SMARCD3/BAF60C. In muscle cells, the BAF complex also contains DPF3. Component of the SWI/SNF-B (PBAF) chromatin remodeling complex, at least composed of SMARCA4/BRG1, SMARCB1/BAF47/SNF5, ACTL6A/BAF53A or ACTL6B/BAF53B, SMARCE1/BAF57, SMARCD1/BAF60A, SMARCD2/BAF60B, perhaps SMARCD3/BAF60C, SMARCC1/BAF155, SMARCC2/BAF170, PBRM1/BAF180, ARID2/BAF200 and actin (ACTB). Interacts with UNKL. Interacts with CEBPE. In terms of processing, ubiquitinated through a signaling process involving RAC1 and the RING finger protein UNKL.

The protein resides in the nucleus. Functionally, involved in transcriptional activation and repression of select genes by chromatin remodeling (alteration of DNA-nucleosome topology). Component of SWI/SNF chromatin remodeling complexes that carry out key enzymatic activities, changing chromatin structure by altering DNA-histone contacts within a nucleosome in an ATP-dependent manner. Critical regulator of myeloid differentiation, controlling granulocytopoiesis and the expression of genes involved in neutrophil granule formation. The polypeptide is SWI/SNF-related matrix-associated actin-dependent regulator of chromatin subfamily D member 2 (SMARCD2) (Bos taurus (Bovine)).